The primary structure comprises 253 residues: Adenylate kinase (253 aa).

15–20 (GSGKGT) contacts ATP. An NMP region spans residues 35-64 (SSGDLLRNAVSQNTPLGQEIKSYLDQGKLL). Residues Ser-36, Arg-41, 62-64 (KLL), 103-106 (GFPR), and Gln-110 contribute to the AMP site. The LID stretch occupies residues 143–176 (SRYICPSCQGIYNKQQGFSRCPKCLVELTRRSDD). Arg-144 provides a ligand contact to ATP. Residues Cys-147 and Cys-150 each coordinate Zn(2+). 153-154 (IY) provides a ligand contact to ATP. Zn(2+) is bound by residues Cys-163 and Cys-166. AMP contacts are provided by Arg-173 and Arg-184. Residue Ala-212 coordinates ATP.

Belongs to the adenylate kinase family. In terms of assembly, monomer.

It localises to the cytoplasm. It catalyses the reaction AMP + ATP = 2 ADP. It participates in purine metabolism; AMP biosynthesis via salvage pathway; AMP from ADP: step 1/1. Functionally, catalyzes the reversible transfer of the terminal phosphate group between ATP and AMP. Plays an important role in cellular energy homeostasis and in adenine nucleotide metabolism. The polypeptide is Adenylate kinase (Chlamydia muridarum (strain MoPn / Nigg)).